The chain runs to 337 residues: Neurogenic differentiation factor 6 (337 aa).

The segment at 43–82 (LRGKSIKRAPGEETEKEEEEEDREEEDENGLPRRRGLRKK) is disordered. The segment covering 54–71 (EETEKEEEEEDREEEDEN) has biased composition (acidic residues). The short motif at 80–86 (RKKKTTK) is the Nuclear localization signal element. In terms of domain architecture, bHLH spans 94–146 (FRRQEANARERNRMHGLNDALDNLRKVVPCYSKTQKLSKIETLRLAKNYIWAL).

Efficient DNA binding requires dimerization with another bHLH protein.

The protein localises to the nucleus. Its function is as follows. Activates E box-dependent transcription in collaboration with TCF3/E47. May be a trans-acting factor involved in the development and maintenance of the mammalian nervous system. Transactivates the promoter of its own gene. The sequence is that of Neurogenic differentiation factor 6 (NEUROD6) from Bos taurus (Bovine).